We begin with the raw amino-acid sequence, 404 residues long: MSENKDHVVVGYTEKPVGERPTGGKFLGYDHLHFWVGNAKQAAGWYTSRFGFEYYAYKGLETGSREVATHVVRNKQGVTLAFSTPYGNDKDNQREMNQHQSLHGDGVKDVAFAVEDCHSIYNKAIQRGAKCAYPPQDLKDEHGSVTIAAVHTYGEVIHTFIQRNDYKGFFMPGFVAHPLKDPLNNVLPDISYNYVDHIVGNQPDNMMTSAADWYEKTLDFHRFWSVDDSMIHTEFSSLRSIVMTDYDQKIKMPINEPADGKRKSQIQEYIDFYAGPGVQHIALNTSDVINTVEGLRARGVEFLSIPTSYYDNLRKALTAQTSITVKEDLDVLQKNHILVDYDEKGYLLQIFTKPVEDRPTLFYEIIQRNNHQGFGAGNFKSLFVSLELEQEKRGNLTEIVKNIY.

VOC domains follow at residues 28-163 (GYDH…FIQR) and 194-353 (YVDH…IFTK). Histidine 197, histidine 280, and glutamate 364 together coordinate Fe cation.

It belongs to the 4HPPD family. Fe cation is required as a cofactor.

The catalysed reaction is 3-(4-hydroxyphenyl)pyruvate + O2 = homogentisate + CO2. It functions in the pathway amino-acid degradation; L-phenylalanine degradation; acetoacetate and fumarate from L-phenylalanine: step 3/6. Its function is as follows. Key enzyme in the degradation of tyrosine. This chain is 4-hydroxyphenylpyruvate dioxygenase (TFA), found in Tetrahymena thermophila.